A 504-amino-acid chain; its full sequence is Glycerol kinase (504 aa).

Thr-13 contacts ADP. ATP is bound by residues Thr-13, Thr-14, and Ser-15. Thr-13 lines the sn-glycerol 3-phosphate pocket. Position 17 (Arg-17) interacts with ADP. Positions 83, 84, and 135 each coordinate sn-glycerol 3-phosphate. The glycerol site is built by Arg-83, Glu-84, and Tyr-135. His-231 is subject to Phosphohistidine; by HPr. Residue Asp-245 coordinates sn-glycerol 3-phosphate. Glycerol-binding residues include Asp-245 and Gln-246. The ADP site is built by Thr-267 and Gly-310. ATP-binding residues include Thr-267, Gly-310, Gln-314, and Gly-411. Gly-411 and Asn-415 together coordinate ADP.

This sequence belongs to the FGGY kinase family. As to quaternary structure, homotetramer and homodimer (in equilibrium). Post-translationally, the phosphoenolpyruvate-dependent sugar phosphotransferase system (PTS), including enzyme I, and histidine-containing protein (HPr) are required for the phosphorylation, which leads to the activation of the enzyme.

The catalysed reaction is glycerol + ATP = sn-glycerol 3-phosphate + ADP + H(+). It functions in the pathway polyol metabolism; glycerol degradation via glycerol kinase pathway; sn-glycerol 3-phosphate from glycerol: step 1/1. Its activity is regulated as follows. Activated by phosphorylation and inhibited by fructose 1,6-bisphosphate (FBP). In terms of biological role, key enzyme in the regulation of glycerol uptake and metabolism. Catalyzes the phosphorylation of glycerol to yield sn-glycerol 3-phosphate. The chain is Glycerol kinase from Pediococcus pentosaceus (strain ATCC 25745 / CCUG 21536 / LMG 10740 / 183-1w).